We begin with the raw amino-acid sequence, 467 residues long: Protein arginine methyltransferase NDUFAF7 homolog, mitochondrial (467 aa).

The protein belongs to the NDUFAF7 family.

It is found in the mitochondrion. It carries out the reaction L-arginyl-[protein] + 2 S-adenosyl-L-methionine = N(omega),N(omega)'-dimethyl-L-arginyl-[protein] + 2 S-adenosyl-L-homocysteine + 2 H(+). Functionally, arginine methyltransferase involved in the assembly or stability of mitochondrial NADH:ubiquinone oxidoreductase complex (complex I). The sequence is that of Protein arginine methyltransferase NDUFAF7 homolog, mitochondrial from Schizosaccharomyces pombe (strain 972 / ATCC 24843) (Fission yeast).